Consider the following 88-residue polypeptide: UPF0297 protein LAR_0520 (88 aa).

The protein belongs to the UPF0297 family.

The sequence is that of UPF0297 protein LAR_0520 from Limosilactobacillus reuteri subsp. reuteri (strain JCM 1112) (Lactobacillus reuteri).